Here is a 279-residue protein sequence, read N- to C-terminus: Type III pantothenate kinase (279 aa).

Residue 6–13 participates in ATP binding; it reads DIGNTLSK. Substrate is bound by residues tyrosine 92 and 99-102; that span reads GVDR. The active-site Proton acceptor is the aspartate 101. Aspartate 120 contributes to the K(+) binding site. ATP is bound at residue serine 123. Threonine 177 contacts substrate.

The protein belongs to the type III pantothenate kinase family. Homodimer. The cofactor is NH4(+). K(+) serves as cofactor.

The protein resides in the cytoplasm. It carries out the reaction (R)-pantothenate + ATP = (R)-4'-phosphopantothenate + ADP + H(+). It participates in cofactor biosynthesis; coenzyme A biosynthesis; CoA from (R)-pantothenate: step 1/5. Catalyzes the phosphorylation of pantothenate (Pan), the first step in CoA biosynthesis. In Chromohalobacter salexigens (strain ATCC BAA-138 / DSM 3043 / CIP 106854 / NCIMB 13768 / 1H11), this protein is Type III pantothenate kinase.